Consider the following 563-residue polypeptide: DNA polymerase III subunit tau (563 aa).

45–52 (GPRGTGKT) serves as a coordination point for ATP. Cys-64, Cys-73, Cys-76, and Cys-79 together coordinate Zn(2+).

Belongs to the DnaX/STICHEL family. As to quaternary structure, component of the DNA clamp loading complex consisting of tau(3):delta(1):delta'(1). The DNA polymerase III holoenzyme complex contains at least 10 different subunits organized into 3 functionally essential subassemblies: the Pol III core, the beta sliding clamp processivity factor and the clamp-loading complex. The Pol III core (subunits alpha, epsilon and theta) contains the polymerase and the 3'-5' exonuclease proofreading activities. The polymerase is tethered to the template via the dimeric beta sliding clamp processivity factor. The DNA clamp-loading complex assembles the beta sliding clamp onto the primed template and plays a central role in the organization and communication at the replication fork. Forms a complex with replicative DNA helicase DnaB (shown with G.stearothermophilus DnaB) tau(3):DnaB(6); a single ATP hydrolysis even is sufficient for complex formation. Colocalizes with DNA helicases PriA, RecQ and RecS.

It localises to the cytoplasm. Its subcellular location is the nucleoid. It carries out the reaction DNA(n) + a 2'-deoxyribonucleoside 5'-triphosphate = DNA(n+1) + diphosphate. Part of the beta sliding clamp loading complex, which hydrolyzes ATP to load the beta clamp onto primed DNA to form the DNA replication pre-initiation complex. DNA polymerase III is a complex, multichain enzyme responsible for most of the replicative DNA synthesis in bacteria. The chain is DNA polymerase III subunit tau from Bacillus subtilis (strain 168).